Consider the following 266-residue polypeptide: Chymotrypsin-like elastase family member 1 (266 aa).

Positions 1-16 are cleaved as a signal peptide; the sequence is MLRFLVLATLVLYGHS. Residues 17-26 constitute a propeptide, activation peptide; sequence TRDFPETNAR. Positions 27-264 constitute a Peptidase S1 domain; sequence VVGGTEARKN…YISWINNVIA (238 aa). Cysteines 56 and 72 form a disulfide. Histidine 71 (charge relay system) is an active-site residue. Ca(2+) contacts are provided by glutamate 85, asparagine 87, glutamine 90, and glutamate 95. A glycan (N-linked (GlcNAc...) asparagine) is linked at asparagine 87. The active-site Charge relay system is the aspartate 119. Cystine bridges form between cysteine 153–cysteine 220, cysteine 184–cysteine 200, and cysteine 210–cysteine 240. Residue serine 214 is the Charge relay system of the active site. N-linked (GlcNAc...) asparagine glycosylation occurs at asparagine 241.

The protein belongs to the peptidase S1 family. Elastase subfamily. Ca(2+) is required as a cofactor.

It localises to the secreted. It catalyses the reaction Hydrolysis of proteins, including elastin. Preferential cleavage: Ala-|-Xaa.. In terms of biological role, serine proteases that hydrolyze many proteins in addition to elastin. This chain is Chymotrypsin-like elastase family member 1 (CELA1), found in Felis catus (Cat).